We begin with the raw amino-acid sequence, 219 residues long: Large ribosomal subunit protein uL4c (219 aa).

The interval 53–81 (REHTASTKTKSQVRGGGKKPWKQKGTGRA) is disordered. Positions 68–79 (GGKKPWKQKGTG) are enriched in basic residues.

The protein belongs to the universal ribosomal protein uL4 family. As to quaternary structure, part of the 50S ribosomal subunit.

Its subcellular location is the plastid. It localises to the chloroplast. Functionally, probably binds the 23S rRNA. In Cyanidium caldarium (Red alga), this protein is Large ribosomal subunit protein uL4c (rpl4).